A 464-amino-acid polypeptide reads, in one-letter code: Desmin (464 aa).

Ser-2 carries the blocked amino end (Ser) modification. The interval Ser-2 to Glu-100 is head. Phosphoserine; by CDK1 is present on residues Ser-7 and Ser-23. Thr-65 is subject to Phosphothreonine; by CDK1. In terms of domain architecture, IF rod spans Glu-100–Ile-408. The segment at Lys-101–Asn-133 is coil 1A. Residues Arg-134 to Val-143 are linker 1. The interval Ala-144–Ala-244 is coil 1B. Positions Gln-245–Pro-260 are linker 12. Positions Asp-261 to Lys-279 are coil 2A. The tract at residues Asn-280–Trp-287 is linker 2. Residues Tyr-288 to Glu-404 form a coil 2B region. The tail stretch occupies residues Glu-405–Leu-464.

This sequence belongs to the intermediate filament family. As to quaternary structure, homomer.

It is found in the cytoplasm. Its subcellular location is the myofibril. It localises to the sarcomere. The protein resides in the z line. The protein localises to the cell membrane. It is found in the sarcolemma. Functionally, muscle-specific type III intermediate filament essential for proper muscular structure and function. Plays a crucial role in maintaining the structure of sarcomeres, inter-connecting the Z-disks and forming the myofibrils, linking them not only to the sarcolemmal cytoskeleton, but also to the nucleus and mitochondria, thus providing strength for the muscle fiber during activity. In adult striated muscle they form a fibrous network connecting myofibrils to each other and to the plasma membrane from the periphery of the Z-line structures. This chain is Desmin (DES), found in Gallus gallus (Chicken).